Reading from the N-terminus, the 488-residue chain is MTKNNEAGWNLDHSYTTLPQSFYTEIPPTPVSSPELVKLNHSLAISLGFNPEELKKEAEIAIFAGNALPEGAHPLAQAYAGHQFGHFNMLGDGRALLIGEQMTPSGKRFDIQLKGSGPTPYSRRGDGRAALGPMLREYIISEAMYALDIPTTRSLAVVTTGEPTYRETKLPGAILTRVASSHIRVGTFQYAAARGSIEDLQSLADYTIKRHYPEIEAHENRYTALLQEVIKKQASLIAKWQLVGFIHGVMNTDNITISGETIDYGPCAFMDNYDQGTVFSSIDTQGRYAYGNQPYMAAWDLARLAESLIPILHEDEEEVLKIAQDEISKFSVQYEKQWFLGMKKKLGLFSNEEQDQSLIEQLLKMMEKFKADYTNTFRSLTLNTIENTALFESPEFKEWYKLWQSRLERQEESKENAYEMMKNNNPSIIPRNHRVEEALEAAVTNGDYSVMEKLLEALSNPYAYATEQEEYCVPPVPTNRPYRTFCGT.

The ATP site is built by G91, G93, R94, K114, D126, G127, R177, and R184. The disordered stretch occupies residues 108–127 (RFDIQLKGSGPTPYSRRGDG). The active-site Proton acceptor is the D253. Residues N254 and D263 each contribute to the Mg(2+) site. D263 lines the ATP pocket.

Belongs to the SELO family. Mg(2+) is required as a cofactor. Mn(2+) serves as cofactor.

The enzyme catalyses L-seryl-[protein] + ATP = 3-O-(5'-adenylyl)-L-seryl-[protein] + diphosphate. It catalyses the reaction L-threonyl-[protein] + ATP = 3-O-(5'-adenylyl)-L-threonyl-[protein] + diphosphate. The catalysed reaction is L-tyrosyl-[protein] + ATP = O-(5'-adenylyl)-L-tyrosyl-[protein] + diphosphate. It carries out the reaction L-histidyl-[protein] + UTP = N(tele)-(5'-uridylyl)-L-histidyl-[protein] + diphosphate. The enzyme catalyses L-seryl-[protein] + UTP = O-(5'-uridylyl)-L-seryl-[protein] + diphosphate. It catalyses the reaction L-tyrosyl-[protein] + UTP = O-(5'-uridylyl)-L-tyrosyl-[protein] + diphosphate. Its function is as follows. Nucleotidyltransferase involved in the post-translational modification of proteins. It can catalyze the addition of adenosine monophosphate (AMP) or uridine monophosphate (UMP) to a protein, resulting in modifications known as AMPylation and UMPylation. The chain is Protein nucleotidyltransferase YdiU from Bacillus anthracis (strain A0248).